Here is a 279-residue protein sequence, read N- to C-terminus: DegV domain-containing protein SP_1112 (279 aa).

The DegV domain maps to 4 to 277; that stretch reads IKIVTDSSVT…ENAWAILIRY (274 aa). Residues T62 and S94 each contribute to the hexadecanoate site.

May bind long-chain fatty acids, such as palmitate, and may play a role in lipid transport or fatty acid metabolism. This Streptococcus pneumoniae serotype 4 (strain ATCC BAA-334 / TIGR4) protein is DegV domain-containing protein SP_1112.